A 392-amino-acid polypeptide reads, in one-letter code: Formate-dependent phosphoribosylglycinamide formyltransferase (392 aa).

N(1)-(5-phospho-beta-D-ribosyl)glycinamide contacts are provided by residues 15 to 16 and Glu75; that span reads EL. ATP-binding positions include Arg107, Lys148, 153–158, 188–191, and Glu196; these read SSGKGQ and EEFL. Positions 112 to 302 constitute an ATP-grasp domain; that stretch reads DLASEELALL…EFELHLRAVL (191 aa). Mg(2+)-binding residues include Glu261 and Glu273. N(1)-(5-phospho-beta-D-ribosyl)glycinamide is bound by residues Asp280, Lys350, and 357 to 358; that span reads RR.

It belongs to the PurK/PurT family. Homodimer.

It carries out the reaction N(1)-(5-phospho-beta-D-ribosyl)glycinamide + formate + ATP = N(2)-formyl-N(1)-(5-phospho-beta-D-ribosyl)glycinamide + ADP + phosphate + H(+). Its pathway is purine metabolism; IMP biosynthesis via de novo pathway; N(2)-formyl-N(1)-(5-phospho-D-ribosyl)glycinamide from N(1)-(5-phospho-D-ribosyl)glycinamide (formate route): step 1/1. Involved in the de novo purine biosynthesis. Catalyzes the transfer of formate to 5-phospho-ribosyl-glycinamide (GAR), producing 5-phospho-ribosyl-N-formylglycinamide (FGAR). Formate is provided by PurU via hydrolysis of 10-formyl-tetrahydrofolate. In Prochlorococcus marinus (strain MIT 9303), this protein is Formate-dependent phosphoribosylglycinamide formyltransferase.